A 192-amino-acid polypeptide reads, in one-letter code: Nucleoside triphosphate pyrophosphatase (192 aa).

Asp73 functions as the Proton acceptor in the catalytic mechanism.

Belongs to the Maf family. It depends on a divalent metal cation as a cofactor.

Its subcellular location is the cytoplasm. The catalysed reaction is a ribonucleoside 5'-triphosphate + H2O = a ribonucleoside 5'-phosphate + diphosphate + H(+). The enzyme catalyses a 2'-deoxyribonucleoside 5'-triphosphate + H2O = a 2'-deoxyribonucleoside 5'-phosphate + diphosphate + H(+). Its function is as follows. Nucleoside triphosphate pyrophosphatase. May have a dual role in cell division arrest and in preventing the incorporation of modified nucleotides into cellular nucleic acids. The polypeptide is Nucleoside triphosphate pyrophosphatase (Ehrlichia chaffeensis (strain ATCC CRL-10679 / Arkansas)).